A 163-amino-acid chain; its full sequence is ATP synthase subunit b (163 aa).

Residues 1–11 (MLWKANVWVLG) constitute a propeptide that is removed on maturation. A helical membrane pass occupies residues 16–36 (GISGGTIIYQLLMFIILLALL).

It belongs to the ATPase B chain family. F-type ATPases have 2 components, F(1) - the catalytic core - and F(0) - the membrane proton channel. F(1) has five subunits: alpha(3), beta(3), gamma(1), delta(1), epsilon(1). F(0) has three main subunits: a(1), b(2) and c(10-14). The alpha and beta chains form an alternating ring which encloses part of the gamma chain. F(1) is attached to F(0) by a central stalk formed by the gamma and epsilon chains, while a peripheral stalk is formed by the delta and b chains.

Its subcellular location is the cell membrane. In terms of biological role, f(1)F(0) ATP synthase produces ATP from ADP in the presence of a proton or sodium gradient. F-type ATPases consist of two structural domains, F(1) containing the extramembraneous catalytic core and F(0) containing the membrane proton channel, linked together by a central stalk and a peripheral stalk. During catalysis, ATP synthesis in the catalytic domain of F(1) is coupled via a rotary mechanism of the central stalk subunits to proton translocation. Its function is as follows. Component of the F(0) channel, it forms part of the peripheral stalk, linking F(1) to F(0). The protein is ATP synthase subunit b of Bacillus sp. (strain PS3).